Here is a 210-residue protein sequence, read N- to C-terminus: DNA-directed RNA polymerases I, II, and III subunit RPABC1 (210 aa).

Position 1 is an N-acetylmethionine (M1). Residue K81 forms a Glycyl lysine isopeptide (Lys-Gly) (interchain with G-Cter in SUMO2) linkage.

Belongs to the archaeal Rpo5/eukaryotic RPB5 RNA polymerase subunit family. Component of the RNA polymerase I (Pol I), RNA polymerase II (Pol II) and RNA polymerase III (Pol III) complexes consisting of at least 13, 12 and 17 subunits, respectively. Pol I complex consists of a ten-subunit catalytic core composed of POLR1A/RPA1, POLR1B/RPA2, POLR1C/RPAC1, POLR1D/RPAC2, POLR1H/RPA12, POLR2E/RPABC1, POLR2F/RPABC2, POLR2H/RPABC3, POLR2K/RPABC4 and POLR2L/RPABC5; a mobile stalk subunit POLR1F/RPA43 protruding from the core and additional subunits homologous to general transcription factors POLR1E/RPA49 and POLR1G/RPA34. Part of Pol I pre-initiation complex (PIC), in which Pol I core assembles with RRN3 and promoter-bound UTBF and SL1/TIF-IB complex. Pol II complex contains a ten-subunit catalytic core composed of POLR2A/RPB1, POLR2B/RPB2, POLR2C/RPB3, POLR2I/RPB9, POLR2J/RPB11, POLR2E/RPABC1, POLR2F/RPABC2, POLR2H/RPABC3, POLR2K/RPABC4 and POLR2L/RPABC5 and a mobile stalk composed of two subunits POLR2D/RPB4 and POLR2G/RPB7. Part of Pol II(G) complex, in which Pol II core associates with an additional subunit POLR2M; unlike conventional Pol II, Pol II(G) functions as a transcriptional repressor. Part of TBP-based Pol II pre-initiation complex (PIC), in which Pol II core assembles with general transcription factors and other specific initiation factors including GTF2E1, GTF2E2, GTF2F1, GTF2F2, TCEA1, ERCC2, ERCC3, GTF2H2, GTF2H3, GTF2H4, GTF2H5, GTF2A1, GTF2A2, GTF2B and TBP; this large multi-subunit PIC complex mediates DNA unwinding and targets Pol II core to the transcription start site where the first phosphodiester bond forms. In Pol II complex, this subunit is present in 2-fold molar excess over the other subunits. Pol III complex consists of a ten-subunit catalytic core composed of POLR3A/RPC1, POLR3B/RPC2, POLR1C/RPAC1, POLR1D/RPAC2, POLR3K/RPC10, POLR2E/RPABC1, POLR2F/RPABC2, POLR2H/RPABC3, POLR2K/RPABC4 and POLR2L/RPABC5; a mobile stalk composed of two subunits POLR3H/RPC8 and CRCP/RPC9, protruding from the core and functioning primarily in transcription initiation; and additional subunits homologous to general transcription factors of the RNA polymerase II machinery, POLR3C/RPC3-POLR3F/RPC6-POLR3G/RPC7 heterotrimer required for transcription initiation and POLR3D/RPC4-POLR3E/RPC5 heterodimer involved in both transcription initiation and termination. Component of the PAQosome complex which is responsible for the biogenesis of several protein complexes and which consists of R2TP complex members RUVBL1, RUVBL2, RPAP3 and PIH1D1, URI complex members PFDN2, PFDN6, PDRG1, UXT and URI1 as well as ASDURF, POLR2E and DNAAF10/WDR92. Interacts with URI1.

It is found in the nucleus. The protein resides in the nucleolus. DNA-dependent RNA polymerase catalyzes the transcription of DNA into RNA using the four ribonucleoside triphosphates as substrates. Common component of RNA polymerases I, II and III which synthesize ribosomal RNA precursors, mRNA precursors and many functional non-coding RNAs, and small RNAs, such as 5S rRNA and tRNAs, respectively. Pol II is the central component of the basal RNA polymerase II transcription machinery. Pols are composed of mobile elements that move relative to each other. In Pol II, POLR2E/RPABC1 is part of the lower jaw surrounding the central large cleft and thought to grab the incoming DNA template. Seems to be the major component in this process. The chain is DNA-directed RNA polymerases I, II, and III subunit RPABC1 (POLR2E) from Pongo abelii (Sumatran orangutan).